A 166-amino-acid chain; its full sequence is Small ribosomal subunit protein uS5 (166 aa).

The S5 DRBM domain maps to L11–V74.

Belongs to the universal ribosomal protein uS5 family. Part of the 30S ribosomal subunit. Contacts proteins S4 and S8.

With S4 and S12 plays an important role in translational accuracy. Functionally, located at the back of the 30S subunit body where it stabilizes the conformation of the head with respect to the body. This is Small ribosomal subunit protein uS5 from Idiomarina loihiensis (strain ATCC BAA-735 / DSM 15497 / L2-TR).